The primary structure comprises 55 residues: Large ribosomal subunit protein bL33B (55 aa).

Belongs to the bacterial ribosomal protein bL33 family.

The sequence is that of Large ribosomal subunit protein bL33B from Salinispora tropica (strain ATCC BAA-916 / DSM 44818 / JCM 13857 / NBRC 105044 / CNB-440).